The following is a 328-amino-acid chain: MSIIQSIIEKAKSNKKKIVLPEGAEPRTLKAADIVLKEGIADLVLLGNADEIRNAAEGLDISKAEIIDPLKSEKFDKYATDFYELRKNKGITLEKAKETIKDNIYFGCMMVKEGYADGLVSGAIHATADLLRPAFQIVKTAPGAKIVSSFFIMEVPNCEFGENGVFLFADCAVNPSPNAEELASIAVQSANTAKTLLGMEPRVAMLSFSTKGSASHELVDKVRTATEIAKNLIPDVAIDGELQLDAALVKEVAELKAPGSPVAGRANVLIFPDLQAGNIGYKLVQRLAKANAIGPITQGMGAPVNDLSRGCSYKDIVDVIATTAVQAQ.

The protein belongs to the phosphate acetyltransferase and butyryltransferase family.

The protein resides in the cytoplasm. It catalyses the reaction acetyl-CoA + phosphate = acetyl phosphate + CoA. The protein operates within metabolic intermediate biosynthesis; acetyl-CoA biosynthesis; acetyl-CoA from acetate: step 2/2. In Thermoanaerobacterium thermosaccharolyticum (strain ATCC 7956 / DSM 571 / NCIMB 9385 / NCA 3814 / NCTC 13789 / WDCM 00135 / 2032) (Clostridium thermosaccharolyticum), this protein is Phosphate acetyltransferase (pta).